Consider the following 138-residue polypeptide: Basic phospholipase A2 DAV-N6 (138 aa).

Positions 1–16 (MRTLWIVAVLLVSVEG) are cleaved as a signal peptide. Disulfide bonds link Cys-42–Cys-131, Cys-44–Cys-60, Cys-59–Cys-111, Cys-65–Cys-138, Cys-66–Cys-104, Cys-73–Cys-97, and Cys-91–Cys-102. Residues Tyr-43, Gly-45, and Gly-47 each contribute to the Ca(2+) site. The active site involves His-63. Asp-64 contacts Ca(2+). The active site involves Asp-105.

It depends on Ca(2+) as a cofactor. As to expression, expressed by the venom gland.

The protein localises to the secreted. The enzyme catalyses a 1,2-diacyl-sn-glycero-3-phosphocholine + H2O = a 1-acyl-sn-glycero-3-phosphocholine + a fatty acid + H(+). Functionally, snake venom phospholipase A2 (PLA2) that inhibits neuromuscular transmission by blocking acetylcholine release from the nerve termini. PLA2 catalyzes the calcium-dependent hydrolysis of the 2-acyl groups in 3-sn-phosphoglycerides. The polypeptide is Basic phospholipase A2 DAV-N6 (Deinagkistrodon acutus (Hundred-pace snake)).